The sequence spans 159 residues: MLKSLLSLVTSGNKEKKKKRSSAGLTGHAPPAADSSFFSEADSSIMNVTSITLPTVSGRDDSIQSTSPVLGYSPFGFVERKNRAASFDFCLSDKPQSDVVVHRRSLQPSTPTPNQSAESSFIENIFDSPGQRNRLHSMIEEKIYEAGSGSPQKFTGRVS.

Residues 9 to 36 form a disordered region; that stretch reads VTSGNKEKKKKRSSAGLTGHAPPAADSS.

This is an uncharacterized protein from Caenorhabditis elegans.